The primary structure comprises 175 residues: 19.0 kDa class II heat shock protein (175 aa).

The sHSP domain maps to 42-165 (DRRAMANTPM…KPRVVEVKVA (124 aa)). Residues 145–175 (TVDKKPPPEPKKPRVVEVKVAGAGEPKGKGK) form a disordered region. The span at 146 to 161 (VDKKPPPEPKKPRVVE) shows a compositional bias: basic and acidic residues.

The protein belongs to the small heat shock protein (HSP20) family. In terms of assembly, may form oligomeric structures.

It is found in the cytoplasm. The sequence is that of 19.0 kDa class II heat shock protein (HSP19.0) from Oryza sativa subsp. japonica (Rice).